The primary structure comprises 379 residues: MAWRGWAQRGWGCGQAWAASVGGRSCEELTAALTPPRLLGRRFNFFIQQKCGFRKAPRKVEPRRSDTGTSGEAYKRSALIPPVEETVFYPSPYPIRSLIKPLFFTVGFTGCAFGSAAIWQYESLKSRVQSYFDGIKADWLDSIRPQKEGDFRKEINKWWNNLSDGQRTVTGIIAANVLVFCLWRVPSLQRTMIRYFTSNPASKVLCSPMLLSTFSHFSLFHMAANMYVLWSFSSSIVNILGQEQFMAVYLSAGVISNFVSYVGKVATGRYGPSLGASGAIMTVLAAVCTKIPEGRLAIIFLPMFTFTAGNALKAIIAMDTAGMILGWKFFDHAAHLGGALFGIWYVTYGHELIWKNREPLVKIWHEIRTNGPKKGGGSK.

The N-terminal 52 residues, 1–52 (MAWRGWAQRGWGCGQAWAASVGGRSCEELTAALTPPRLLGRRFNFFIQQKCG), are a transit peptide targeting the mitochondrion. The Mitochondrial matrix portion of the chain corresponds to 53-101 (FRKAPRKVEPRRSDTGTSGEAYKRSALIPPVEETVFYPSPYPIRSLIKP). A Phosphoserine modification is found at Ser-65. Residue Thr-69 is modified to Phosphothreonine. A Phosphoserine modification is found at Ser-70. Residues 102–121 (LFFTVGFTGCAFGSAAIWQY) form a helical membrane-spanning segment. Residues 122 to 167 (ESLKSRVQSYFDGIKADWLDSIRPQKEGDFRKEINKWWNNLSDGQR) are Mitochondrial intermembrane-facing. The helical transmembrane segment at 168–187 (TVTGIIAANVLVFCLWRVPS) threads the bilayer. At 188–207 (LQRTMIRYFTSNPASKVLCS) the chain is on the mitochondrial matrix side. A helical transmembrane segment spans residues 208–230 (PMLLSTFSHFSLFHMAANMYVLW). Topologically, residues 231-244 (SFSSSIVNILGQEQ) are mitochondrial intermembrane. A helical transmembrane segment spans residues 245–262 (FMAVYLSAGVISNFVSYV). The Mitochondrial matrix segment spans residues 263 to 273 (GKVATGRYGPS). A helical transmembrane segment spans residues 274-292 (LGASGAIMTVLAAVCTKIP). Ser-277 functions as the Nucleophile in the catalytic mechanism. Residues 293–295 (EGR) are Mitochondrial intermembrane-facing. Residues 296 to 318 (LAIIFLPMFTFTAGNALKAIIAM) form a helical membrane-spanning segment. At 319–332 (DTAGMILGWKFFDH) the chain is on the mitochondrial matrix side. A helical membrane pass occupies residues 333–354 (AAHLGGALFGIWYVTYGHELIW). His-335 is a catalytic residue. The Mitochondrial intermembrane segment spans residues 355 to 379 (KNREPLVKIWHEIRTNGPKKGGGSK).

Belongs to the peptidase S54 family. In terms of assembly, interacts with PSEN1 and PSEN2. Binds OPA1. Post-translationally, P-beta is proteolytically processed (beta-cleavage) in a PARL-dependent manner.

The protein localises to the mitochondrion inner membrane. The protein resides in the nucleus. The enzyme catalyses Cleaves type-1 transmembrane domains using a catalytic dyad composed of serine and histidine that are contributed by different transmembrane domains.. Functionally, required for the control of apoptosis during postnatal growth. Essential for proteolytic processing of an antiapoptotic form of OPA1 which prevents the release of mitochondrial cytochrome c in response to intrinsic apoptotic signals. Required for the maturation of PINK1 into its 52kDa mature form after its cleavage by mitochondrial-processing peptidase (MPP). Promotes cleavage of serine/threonine-protein phosphatase PGAM5 in damaged mitochondria in response to loss of mitochondrial membrane potential. Mediates differential cleavage of PINK1 and PGAM5 depending on the health status of mitochondria, disassociating from PINK1 and associating with PGAM5 in response to mitochondrial membrane potential loss. Required for processing of CLPB into a form with higher protein disaggregase activity by removing an autoinhibitory N-terminal peptide. Promotes processing of DIABLO/SMAC in the mitochondrion which is required for DIABLO apoptotic activity. Also required for cleavage of STARD7 and TTC19. Promotes changes in mitochondria morphology regulated by phosphorylation of P-beta domain. The sequence is that of Presenilin-associated rhomboid-like protein, mitochondrial (PARL) from Pongo abelii (Sumatran orangutan).